Here is a 252-residue protein sequence, read N- to C-terminus: 2-succinyl-6-hydroxy-2,4-cyclohexadiene-1-carboxylate synthase (252 aa).

The protein belongs to the AB hydrolase superfamily. MenH family. In terms of assembly, monomer.

The enzyme catalyses 5-enolpyruvoyl-6-hydroxy-2-succinyl-cyclohex-3-ene-1-carboxylate = (1R,6R)-6-hydroxy-2-succinyl-cyclohexa-2,4-diene-1-carboxylate + pyruvate. The protein operates within quinol/quinone metabolism; 1,4-dihydroxy-2-naphthoate biosynthesis; 1,4-dihydroxy-2-naphthoate from chorismate: step 3/7. It functions in the pathway quinol/quinone metabolism; menaquinone biosynthesis. Catalyzes a proton abstraction reaction that results in 2,5-elimination of pyruvate from 2-succinyl-5-enolpyruvyl-6-hydroxy-3-cyclohexene-1-carboxylate (SEPHCHC) and the formation of 2-succinyl-6-hydroxy-2,4-cyclohexadiene-1-carboxylate (SHCHC). In Escherichia fergusonii (strain ATCC 35469 / DSM 13698 / CCUG 18766 / IAM 14443 / JCM 21226 / LMG 7866 / NBRC 102419 / NCTC 12128 / CDC 0568-73), this protein is 2-succinyl-6-hydroxy-2,4-cyclohexadiene-1-carboxylate synthase.